Here is a 385-residue protein sequence, read N- to C-terminus: Phospho-N-acetylmuramoyl-pentapeptide-transferase (385 aa).

Helical transmembrane passes span 23 to 43 (FITV…LGAG), 79 to 99 (MGGI…GAVA), 103 to 123 (VWLS…DDYV), 135 to 155 (AWYK…VLYF), 186 to 206 (LGVD…VTAV), 218 to 238 (GLTT…VYVS), 258 to 278 (LTVF…YNGY), 282 to 302 (VFMG…TILM), 307 to 327 (LLLP…IVQT), and 362 to 382 (KIVT…LLIL).

The protein belongs to the glycosyltransferase 4 family. MraY subfamily. It depends on Mg(2+) as a cofactor.

Its subcellular location is the cell inner membrane. It carries out the reaction UDP-N-acetyl-alpha-D-muramoyl-L-alanyl-gamma-D-glutamyl-meso-2,6-diaminopimeloyl-D-alanyl-D-alanine + di-trans,octa-cis-undecaprenyl phosphate = di-trans,octa-cis-undecaprenyl diphospho-N-acetyl-alpha-D-muramoyl-L-alanyl-D-glutamyl-meso-2,6-diaminopimeloyl-D-alanyl-D-alanine + UMP. Its pathway is cell wall biogenesis; peptidoglycan biosynthesis. In terms of biological role, catalyzes the initial step of the lipid cycle reactions in the biosynthesis of the cell wall peptidoglycan: transfers peptidoglycan precursor phospho-MurNAc-pentapeptide from UDP-MurNAc-pentapeptide onto the lipid carrier undecaprenyl phosphate, yielding undecaprenyl-pyrophosphoryl-MurNAc-pentapeptide, known as lipid I. This is Phospho-N-acetylmuramoyl-pentapeptide-transferase from Salinibacter ruber (strain DSM 13855 / M31).